Reading from the N-terminus, the 77-residue chain is ATP synthase subunit 9, mitochondrial (77 aa).

Helical transmembrane passes span 8-28 and 45-72; these read MGAG…GNVL and LFGY…LISF.

This sequence belongs to the ATPase C chain family. In terms of assembly, F-type ATPases have 2 components, CF(1) - the catalytic core - and CF(0) - the membrane proton channel. CF(1) has five subunits: alpha(3), beta(3), gamma(1), delta(1), epsilon(1). CF(0) has three main subunits: a, b and c.

Its subcellular location is the mitochondrion membrane. Functionally, this protein is one of the chains of the nonenzymatic membrane component (F0) of mitochondrial ATPase. The protein is ATP synthase subunit 9, mitochondrial (ATP9) of Petunia sp. (Petunia).